Consider the following 453-residue polypeptide: Putative sodium-coupled neutral amino acid transporter 11 (453 aa).

A disordered region spans residues 1-34 (MSYQQPQLRGPLQRETDPSDRESLVSGHEHGGKS). A compositionally biased stretch (basic and acidic residues) spans 12–32 (LQRETDPSDRESLVSGHEHGG). The next 11 helical transmembrane spans lie at 39-59 (AVFNVVNSVIGSGIIGLPYSM), 66-86 (LGILLLFWVSYITDFSLVLLI), 106-126 (GFPGYLLLSTLQFMYPFIAMI), 152-172 (FISRHFIIVVSTVTCTLPLSL), 179-199 (LGKISFISTILTAVILGVVVT), 222-242 (AIQAIGVMSFAFICHHNCFLV), 262-282 (ILVSVFICVLFATCGYFTFTG), 299-319 (VTFGRFCYGITVILTYPIECF), 337-357 (VFHVTLTAAIVTAATLISLLI), 359-379 (CLGIVLELNGVLCAAPLIFII), and 399-419 (MACVMFPVGAVVMVAGFVMAI).

Belongs to the amino acid/polyamine transporter 2 family. As to expression, widely expressed.

It localises to the membrane. Putative sodium-dependent amino acid/proton antiporter. This chain is Putative sodium-coupled neutral amino acid transporter 11 (Slc38a11), found in Rattus norvegicus (Rat).